We begin with the raw amino-acid sequence, 430 residues long: tRNA(Ile)-lysidine synthase (430 aa).

21 to 26 (SGGLDS) serves as a coordination point for ATP.

The protein belongs to the tRNA(Ile)-lysidine synthase family.

The protein resides in the cytoplasm. The enzyme catalyses cytidine(34) in tRNA(Ile2) + L-lysine + ATP = lysidine(34) in tRNA(Ile2) + AMP + diphosphate + H(+). In terms of biological role, ligates lysine onto the cytidine present at position 34 of the AUA codon-specific tRNA(Ile) that contains the anticodon CAU, in an ATP-dependent manner. Cytidine is converted to lysidine, thus changing the amino acid specificity of the tRNA from methionine to isoleucine. The polypeptide is tRNA(Ile)-lysidine synthase (Salmonella newport (strain SL254)).